Reading from the N-terminus, the 890-residue chain is UPF0182 protein SYNW1212 (890 aa).

8 helical membrane passes run 21 to 41 (WLLQ…AIRW), 64 to 84 (LTLL…NGLI), 98 to 118 (WQVS…LVAV), 134 to 154 (AVVL…SIPL), 173 to 193 (FAAL…CLGN), 219 to 239 (RLLM…CWLS), 268 to 288 (LLTV…SLLL), and 295 to 315 (VLAV…WLIL).

This sequence belongs to the UPF0182 family.

The protein localises to the cell membrane. The sequence is that of UPF0182 protein SYNW1212 from Parasynechococcus marenigrum (strain WH8102).